The primary structure comprises 127 residues: Lysozyme C (127 aa).

The C-type lysozyme domain maps to 1–127 (KDIPRCELVK…KDLSSYVRGC (127 aa)). Intrachain disulfides connect Cys6/Cys127, Cys30/Cys115, Cys64/Cys80, and Cys76/Cys94. Catalysis depends on residues Glu35 and Asp52. Residues Lys82, Asp85, Asn87, Asp90, and Asp91 each contribute to the Ca(2+) site.

It belongs to the glycosyl hydrolase 22 family. Monomer. Ca(2+) serves as cofactor.

It is found in the secreted. It carries out the reaction Hydrolysis of (1-&gt;4)-beta-linkages between N-acetylmuramic acid and N-acetyl-D-glucosamine residues in a peptidoglycan and between N-acetyl-D-glucosamine residues in chitodextrins.. In terms of biological role, lysozymes have primarily a bacteriolytic function; those in tissues and body fluids are associated with the monocyte-macrophage system and enhance the activity of immunoagents. In Columba livia (Rock dove), this protein is Lysozyme C (LYZ).